The following is a 953-amino-acid chain: Dual serine/threonine and tyrosine protein kinase (953 aa).

Positions 665 to 926 (PKLEREIGRG…VQSKLQDIYT (262 aa)) constitute a Protein kinase domain. ATP-binding positions include 671–679 (IGRGQYGVV) and K694. The active-site Proton acceptor is the D791. Residues 932–953 (REAEGGGGGGAKEQQNLKSDTL) form a disordered region.

Belongs to the protein kinase superfamily. Ser/Thr protein kinase family.

Its subcellular location is the cytoplasm. It is found in the cell membrane. The protein resides in the apical cell membrane. The protein localises to the basolateral cell membrane. It localises to the cell junction. The enzyme catalyses L-seryl-[protein] + ATP = O-phospho-L-seryl-[protein] + ADP + H(+). The catalysed reaction is L-threonyl-[protein] + ATP = O-phospho-L-threonyl-[protein] + ADP + H(+). It carries out the reaction L-tyrosyl-[protein] + ATP = O-phospho-L-tyrosyl-[protein] + ADP + H(+). Its function is as follows. May act as a positive regulator of ERK phosphorylation downstream of fibroblast growth factor-receptor activation. May induce both caspase-dependent apoptosis and caspase-independent cell death. May play a role in the embryonic development. The protein is Dual serine/threonine and tyrosine protein kinase of Strongylocentrotus purpuratus (Purple sea urchin).